The sequence spans 332 residues: tRNA-dihydrouridine synthase B (332 aa).

FMN is bound by residues Pro16–Ala18 and Gln70. Residue Cys100 is the Proton donor of the active site. Residues Lys139, Asn200–Asp202, and Gly224–Arg225 contribute to the FMN site.

It belongs to the Dus family. DusB subfamily. Requires FMN as cofactor.

It catalyses the reaction a 5,6-dihydrouridine in tRNA + NAD(+) = a uridine in tRNA + NADH + H(+). The catalysed reaction is a 5,6-dihydrouridine in tRNA + NADP(+) = a uridine in tRNA + NADPH + H(+). In terms of biological role, catalyzes the synthesis of 5,6-dihydrouridine (D), a modified base found in the D-loop of most tRNAs, via the reduction of the C5-C6 double bond in target uridines. This Xanthomonas campestris pv. campestris (strain ATCC 33913 / DSM 3586 / NCPPB 528 / LMG 568 / P 25) protein is tRNA-dihydrouridine synthase B.